We begin with the raw amino-acid sequence, 253 residues long: U1 small nuclear ribonucleoprotein A (253 aa).

Positions 23-102 (VTIYINNLNE…KPMRIQYAKT (80 aa)) constitute an RRM 1 domain. A disordered region spans residues 111-140 (DGTFVPRERRKRNDEKPEKKQKREQHHDVS). Residues 179 to 253 (NILFVQNLPH…NQMLISYAKK (75 aa)) form the RRM 2 domain.

This sequence belongs to the RRM U1 A/B'' family. Component of the spliceosome where it is associated with snRNP U1.

Its subcellular location is the nucleus. The protein localises to the nucleolus. Functionally, involved in nuclear pre-mRNA splicing. This Oryza sativa subsp. indica (Rice) protein is U1 small nuclear ribonucleoprotein A.